A 204-amino-acid chain; its full sequence is Large ribosomal subunit protein uL4 (204 aa).

Residues 49 to 74 (AKKRGEVSGGGKKPWSQKGGGRARAG) form a disordered region. The span at 55–71 (VSGGGKKPWSQKGGGRA) shows a compositional bias: gly residues.

This sequence belongs to the universal ribosomal protein uL4 family. In terms of assembly, part of the 50S ribosomal subunit.

Functionally, one of the primary rRNA binding proteins, this protein initially binds near the 5'-end of the 23S rRNA. It is important during the early stages of 50S assembly. It makes multiple contacts with different domains of the 23S rRNA in the assembled 50S subunit and ribosome. In terms of biological role, forms part of the polypeptide exit tunnel. The polypeptide is Large ribosomal subunit protein uL4 (Wolinella succinogenes (strain ATCC 29543 / DSM 1740 / CCUG 13145 / JCM 31913 / LMG 7466 / NCTC 11488 / FDC 602W) (Vibrio succinogenes)).